The chain runs to 196 residues: Putative 3-methyladenine DNA glycosylase (196 aa).

The protein belongs to the DNA glycosylase MPG family.

The sequence is that of Putative 3-methyladenine DNA glycosylase from Bacillus velezensis (strain DSM 23117 / BGSC 10A6 / LMG 26770 / FZB42) (Bacillus amyloliquefaciens subsp. plantarum).